The primary structure comprises 207 residues: MIINLADVEQLSIKAESVDFQYDMYKKVCEKFTDFEQSVLWQCMEAKKNEALHKHLNEIIKKHLTKSPYQLYRGISKSTKELIKDLQVGEVFSTNRVDSFTTSLHTACSFSYAEYFTETILRLKTDKAFNYSDHISDIILSSPNTEFKYTYEDTDGLDSERTDNLMMIVREQEWMIPIGKYKITSISKEKLHDSFGTFKVYDIEVVE.

Arginine 73 contacts NAD(+). Glutamate 173 is a catalytic residue.

It belongs to the Tevenvirinae NAD--protein ADP-ribosyltransferase modA family.

The protein resides in the virion. It catalyses the reaction L-arginyl-[protein] + NAD(+) = N(omega)-(ADP-D-ribosyl)-L-arginyl-[protein] + nicotinamide + H(+). Its function is as follows. ADP-ribosyltransferase that regulates transcription by ADP-ribosylation of host ribosomal protein S1. Additional identified targets include proteins involved in either translation or cellular metabolism such as elongation factor-Tu or trigger factor. Also reprograms the host's gene-expression system by RNAylating host ribosomal protein S1. ModB can attach NAD-capped RNAs to target proteins post-transcriptionally resulting in covalent RNA-protein conjugates. This Enterobacteria phage T4 (Bacteriophage T4) protein is NAD--protein ADP-ribosyltransferase modB.